Reading from the N-terminus, the 254-residue chain is Leucyl/phenylalanyl-tRNA--protein transferase (254 aa).

This sequence belongs to the L/F-transferase family.

It localises to the cytoplasm. It carries out the reaction N-terminal L-lysyl-[protein] + L-leucyl-tRNA(Leu) = N-terminal L-leucyl-L-lysyl-[protein] + tRNA(Leu) + H(+). The enzyme catalyses N-terminal L-arginyl-[protein] + L-leucyl-tRNA(Leu) = N-terminal L-leucyl-L-arginyl-[protein] + tRNA(Leu) + H(+). It catalyses the reaction L-phenylalanyl-tRNA(Phe) + an N-terminal L-alpha-aminoacyl-[protein] = an N-terminal L-phenylalanyl-L-alpha-aminoacyl-[protein] + tRNA(Phe). In terms of biological role, functions in the N-end rule pathway of protein degradation where it conjugates Leu, Phe and, less efficiently, Met from aminoacyl-tRNAs to the N-termini of proteins containing an N-terminal arginine or lysine. The protein is Leucyl/phenylalanyl-tRNA--protein transferase of Burkholderia ambifaria (strain MC40-6).